Consider the following 115-residue polypeptide: NADH-ubiquinone oxidoreductase chain 3 (115 aa).

Transmembrane regions (helical) follow at residues 5-25 (TALL…FWFF), 55-75 (FFLV…LLPL), and 86-106 (IMML…AYEW).

The protein belongs to the complex I subunit 3 family. Core subunit of respiratory chain NADH dehydrogenase (Complex I) which is composed of 45 different subunits. Interacts with TMEM186. Interacts with TMEM242.

Its subcellular location is the mitochondrion inner membrane. It carries out the reaction a ubiquinone + NADH + 5 H(+)(in) = a ubiquinol + NAD(+) + 4 H(+)(out). Its function is as follows. Core subunit of the mitochondrial membrane respiratory chain NADH dehydrogenase (Complex I) which catalyzes electron transfer from NADH through the respiratory chain, using ubiquinone as an electron acceptor. Essential for the catalytic activity of complex I. This Peromyscus sejugis (Santa Cruz mouse) protein is NADH-ubiquinone oxidoreductase chain 3.